A 51-amino-acid chain; its full sequence is Proteinase inhibitor PTI (51 aa).

4 disulfides stabilise this stretch: cysteine 3–cysteine 40, cysteine 6–cysteine 24, cysteine 7–cysteine 36, and cysteine 13–cysteine 49.

This sequence belongs to the protease inhibitor I20 (potato type II proteinase inhibitor) family.

It is found in the secreted. This is Proteinase inhibitor PTI from Solanum tuberosum (Potato).